Here is a 128-residue protein sequence, read N- to C-terminus: UPF0212 protein TGAM_1344 (128 aa).

It belongs to the UPF0212 family.

The sequence is that of UPF0212 protein TGAM_1344 from Thermococcus gammatolerans (strain DSM 15229 / JCM 11827 / EJ3).